A 473-amino-acid polypeptide reads, in one-letter code: ATP synthase subunit beta (473 aa).

158–165 is an ATP binding site; sequence GGAGVGKT.

The protein belongs to the ATPase alpha/beta chains family. F-type ATPases have 2 components, CF(1) - the catalytic core - and CF(0) - the membrane proton channel. CF(1) has five subunits: alpha(3), beta(3), gamma(1), delta(1), epsilon(1). CF(0) has three main subunits: a(1), b(2) and c(9-12). The alpha and beta chains form an alternating ring which encloses part of the gamma chain. CF(1) is attached to CF(0) by a central stalk formed by the gamma and epsilon chains, while a peripheral stalk is formed by the delta and b chains.

The protein resides in the cell membrane. It carries out the reaction ATP + H2O + 4 H(+)(in) = ADP + phosphate + 5 H(+)(out). Its function is as follows. Produces ATP from ADP in the presence of a proton gradient across the membrane. The catalytic sites are hosted primarily by the beta subunits. This Geobacillus kaustophilus (strain HTA426) protein is ATP synthase subunit beta.